Reading from the N-terminus, the 282-residue chain is Shikimate kinase (282 aa).

Residue 86 to 96 coordinates ATP; that stretch reads PIKSGLSSSSA.

Belongs to the GHMP kinase family. Archaeal shikimate kinase subfamily.

The protein resides in the cytoplasm. The catalysed reaction is shikimate + ATP = 3-phosphoshikimate + ADP + H(+). Its pathway is metabolic intermediate biosynthesis; chorismate biosynthesis; chorismate from D-erythrose 4-phosphate and phosphoenolpyruvate: step 5/7. This is Shikimate kinase (aroK) from Methanocaldococcus jannaschii (strain ATCC 43067 / DSM 2661 / JAL-1 / JCM 10045 / NBRC 100440) (Methanococcus jannaschii).